We begin with the raw amino-acid sequence, 199 residues long: Ribosome biogenesis protein RLP24 (199 aa).

The interval 147–182 (KEQERAESVSEQEESEEEEEDMEIDSDEEEEEQLEK) is disordered. A compositionally biased stretch (acidic residues) spans 156–179 (SEQEESEEEEEDMEIDSDEEEEEQ). At S172 the chain carries Phosphoserine.

The protein belongs to the eukaryotic ribosomal protein eL24 family. As to quaternary structure, associated with nucleolar and cytoplasmic pre-60S particles. At the end of biogenesis it dissociates from cytoplasmic pre-60S particles and is likely to be exchanged for its ribosomal homolog, RPL24. Interacts (via C-terminus) with AFG2 (hexameric form); the interaction is direct, recruits AFG2 to pre-60S ribosomal particles and promotes AFG2 ATPase activity and RLP24 release from pre-60S ribosomal particles. Interacts with NOG1; the interaction is direct.

Its subcellular location is the cytoplasm. The protein localises to the nucleus. Its function is as follows. Involved in the biogenesis of the 60S ribosomal subunit. Ensures the docking of NOG1 to pre-60S ribosomal particles. Activates and recruits ATPase AFG2 to cytoplasmic pre-60S ribosomal particles. The protein is Ribosome biogenesis protein RLP24 (RLP24) of Saccharomyces cerevisiae (strain ATCC 204508 / S288c) (Baker's yeast).